The sequence spans 1051 residues: Outer capsid protein VP2 (1051 aa).

The protein belongs to the orbivirus VP2 family.

The protein localises to the virion. Functionally, the VP2 protein is one of the two proteins (with VP5) which constitute the virus particle outer capsid. It is the major target of the host immunogenic response. The polypeptide is Outer capsid protein VP2 (Segment-2) (African horse sickness virus (AHSV)).